Consider the following 342-residue polypeptide: L-threonine 3-dehydrogenase (342 aa).

Cysteine 38 contributes to the Zn(2+) binding site. Active-site charge relay system residues include threonine 40 and histidine 43. 6 residues coordinate Zn(2+): histidine 63, glutamate 64, cysteine 93, cysteine 96, cysteine 99, and cysteine 107. NAD(+) is bound by residues isoleucine 175, aspartate 195, arginine 200, 262–264 (LGI), and 286–287 (IY).

Belongs to the zinc-containing alcohol dehydrogenase family. Homotetramer. Zn(2+) serves as cofactor.

The protein localises to the cytoplasm. It catalyses the reaction L-threonine + NAD(+) = (2S)-2-amino-3-oxobutanoate + NADH + H(+). The protein operates within amino-acid degradation; L-threonine degradation via oxydo-reductase pathway; glycine from L-threonine: step 1/2. In terms of biological role, catalyzes the NAD(+)-dependent oxidation of L-threonine to 2-amino-3-ketobutyrate. The protein is L-threonine 3-dehydrogenase of Burkholderia multivorans (strain ATCC 17616 / 249).